The primary structure comprises 1897 residues: 1,3-beta-glucan synthase component FKS1 (1897 aa).

Residues 1 to 106 (MSGYPAGHYE…SETFSDFTMR (106 aa)) form a disordered region. Over residues 8 to 29 (HYEDGYGHQEHGGDAYYQDEHG) the composition is skewed to basic and acidic residues. Low complexity predominate over residues 74–83 (GDQYYDQGNG). 17 helical membrane-spanning segments follow: residues 487 to 507 (IWVI…PTLY), 525 to 545 (WSAV…ATLC), 564 to 584 (LMFL…VFGF), 591 to 611 (TICL…FFFF), 655 to 675 (LWIC…TLSL), 707 to 727 (ILLG…SYLW), 728 to 748 (YVIC…VSIW), 1329 to 1349 (NMFI…LGAL), 1386 to 1406 (CVVS…VQEL), 1473 to 1493 (FAGP…FATS), 1497 to 1517 (TPAL…PFLF), 1588 to 1608 (IFFS…VPYL), 1630 to 1650 (IAIV…MFFG), 1666 to 1686 (FGAV…LVIF), 1701 to 1721 (VLGM…IISL), 1766 to 1786 (FSAD…ALCI), and 1826 to 1846 (FAIL…APLV).

The protein belongs to the glycosyltransferase 48 family. As to quaternary structure, component of the 1,3-beta-glucan synthase (GS) complex composed of a catalytic subunit fksA and a regulatory subunit.

The protein localises to the mitochondrion. It localises to the cell membrane. It carries out the reaction [(1-&gt;3)-beta-D-glucosyl](n) + UDP-alpha-D-glucose = [(1-&gt;3)-beta-D-glucosyl](n+1) + UDP + H(+). Functionally, catalytic subunit of the 1,3-beta-glucan synthase. Synthesizes 1,3-beta-glucan, a major structural component of the fungal cell wall. Involved in cell wall synthesis, maintenance and remodeling. The protein is 1,3-beta-glucan synthase component FKS1 of Aspergillus niger (strain ATCC MYA-4892 / CBS 513.88 / FGSC A1513).